The following is a 278-amino-acid chain: 4-hydroxy-tetrahydrodipicolinate reductase (278 aa).

NAD(+) contacts are provided by residues 13 to 18 and 111 to 113; these read GAAGKM and GTT. Residue histidine 167 is the Proton donor/acceptor of the active site. Position 168 (histidine 168) interacts with (S)-2,3,4,5-tetrahydrodipicolinate. Catalysis depends on lysine 171, which acts as the Proton donor. A (S)-2,3,4,5-tetrahydrodipicolinate-binding site is contributed by 177-178; it reads GT.

Belongs to the DapB family.

It is found in the cytoplasm. The enzyme catalyses (S)-2,3,4,5-tetrahydrodipicolinate + NAD(+) + H2O = (2S,4S)-4-hydroxy-2,3,4,5-tetrahydrodipicolinate + NADH + H(+). The catalysed reaction is (S)-2,3,4,5-tetrahydrodipicolinate + NADP(+) + H2O = (2S,4S)-4-hydroxy-2,3,4,5-tetrahydrodipicolinate + NADPH + H(+). It participates in amino-acid biosynthesis; L-lysine biosynthesis via DAP pathway; (S)-tetrahydrodipicolinate from L-aspartate: step 4/4. Catalyzes the conversion of 4-hydroxy-tetrahydrodipicolinate (HTPA) to tetrahydrodipicolinate. The polypeptide is 4-hydroxy-tetrahydrodipicolinate reductase (Nostoc punctiforme (strain ATCC 29133 / PCC 73102)).